The chain runs to 108 residues: Translation initiation factor 1A (108 aa).

One can recognise an S1-like domain in the interval 11-85 (PSRDVPRPEE…NRCDILYKYG (75 aa)).

It belongs to the eIF-1A family.

In terms of biological role, seems to be required for maximal rate of protein biosynthesis. Enhances ribosome dissociation into subunits and stabilizes the binding of the initiator Met-tRNA(I) to 40 S ribosomal subunits. This is Translation initiation factor 1A (eIF1A) from Saccharolobus solfataricus (strain ATCC 35092 / DSM 1617 / JCM 11322 / P2) (Sulfolobus solfataricus).